A 96-amino-acid polypeptide reads, in one-letter code: UPF0235 protein YggU (96 aa).

It belongs to the UPF0235 family.

In Shigella flexneri, this protein is UPF0235 protein YggU.